A 575-amino-acid polypeptide reads, in one-letter code: MSLAFNVGVTPFSGQRVGSRKEKFPVQGFPVTTPNRSRLIVNCSLTTIDFMAKMKENFKREDDKFPTTTTLRSEDIPSNLCIIDTLQRLGVDQFFQYEINTILDNTFRLWQEKHKVIYGNVTTHAMAFRLLRVKGYEVSSEELAPYGNQEAVSQQTNDLPMIIELYRAANERIYEEERSLEKILAWTTIFLNKQVQDNSIPDKKLHKLVEFYLRNYKGITIRLGARRNLELYDMTYYQALKSTNRFSNLCNEDFLVFAKQDFDIHEAQNQKGLQQLQRWYADCRLDTLNFGRDVVIIANYLASLIIGDHAFDYVRLAFAKTSVLVTIMDDFFDCHGSSQECDKIIELVKEWKENPDAEYGSEELEILFMALYNTVNELAERARVEQGRSVKEFLVKLWVEILSAFKIELDTWSNGTQQSFDEYISSSWLSNGSRLTGLLTMQFVGVKLSDEMLMSEECTDLARHVCMVGRLLNDVCSSEREREENIAGKSYSILLATEKDGRKVSEDEAIAEINEMVEYHWRKVLQIVYKKESILPRRCKDVFLEMAKGTFYAYGINDELTSPQQSKEDMKSFVF.

The N-terminal 51 residues, 1–51 (MSLAFNVGVTPFSGQRVGSRKEKFPVQGFPVTTPNRSRLIVNCSLTTIDFM), are a transit peptide targeting the chloroplast. Mg(2+) contacts are provided by aspartate 329, aspartate 333, asparagine 473, serine 477, and glutamate 481. The short motif at 329–333 (DDFFD) is the DDXXD motif element.

It belongs to the terpene synthase family.

It is found in the plastid. The protein resides in the chloroplast. It catalyses the reaction 8-hydroxycopalyl diphosphate + H2O = sclareol + diphosphate. It functions in the pathway secondary metabolite biosynthesis; terpenoid biosynthesis. Involved in the biosynthesis of labdane-type diterpenoid including sclareol, a diterpene-diol that is used as fragrance and flavoring, and has anticancer effects (able to kill leukemic and colon cancer cells by apoptosis). Sclareol can also be used as synthesis precursor of ambergris substitution fragance products such as ambrox. Terpene synthase that catalyzes the conversion of 8-hydroxy-copalyl diphosphate to sclareol. This is Sclareol synthase, chloroplastic from Salvia sclarea (Clary sage).